The primary structure comprises 481 residues: MIIDSKGRRIIPPSARRFMIVTAIAVAIFVVITGVVIFVTRPPTSDSAATFHRGDWQAPPEALLSSPMRVRPVPGWRVRMTDLGLPESAVFADTELTHEAEPFVGAMEKRAYFMAMSTTDPRRWLVGLDLSTGRPLFSPVSIDPGPDFVKCFVNGPDQVLCAADGKPEGKTATIAWVVDTRTGEVVFNGPTDLHVTPGSGSHLKQVGSYVVAEIQGKGLSGVGPRAETTWLIPDAKKVTPTNRNADTAAPRLAVAEDLAGGPDHAVVFSVVDGTVITPDLGADRTPERAVVYPQGFAILAAGKRGSGLRDTVLFFDNAGNRVGESGIQGSLSDLSMVLPMVQSAPSYTVFGANGAGLIQLPGEGLDAVLIGHRLYAPESEWDGPVKVRRWRQFDLRTGEEGTACLPNMQWYIANDGQVGVFETSQHETTGATFFGMDLTTCEKLWTVPVNWESFHRLWRIDDTLVELSDDGKELHSLVAPA.

A helical membrane pass occupies residues 18-38 (FMIVTAIAVAIFVVITGVVIF).

The protein resides in the cell inner membrane. Its function is as follows. Involved in DNA conjugation in the recipient strain. This is an uncharacterized protein from Mycolicibacterium smegmatis (strain MKD8) (Mycobacterium smegmatis).